Here is a 554-residue protein sequence, read N- to C-terminus: Urocanate hydratase (554 aa).

Residues 51-52 (GG), Q129, 175-177 (GMG), E195, 241-242 (NA), 262-266 (QTSAH), 272-273 (YL), and Y321 contribute to the NAD(+) site. C409 is a catalytic residue. An NAD(+)-binding site is contributed by G491.

Belongs to the urocanase family. The cofactor is NAD(+).

It is found in the cytoplasm. It catalyses the reaction 4-imidazolone-5-propanoate = trans-urocanate + H2O. Its pathway is amino-acid degradation; L-histidine degradation into L-glutamate; N-formimidoyl-L-glutamate from L-histidine: step 2/3. Its function is as follows. Catalyzes the conversion of urocanate to 4-imidazolone-5-propionate. In Methylobacterium nodulans (strain LMG 21967 / CNCM I-2342 / ORS 2060), this protein is Urocanate hydratase.